Reading from the N-terminus, the 68-residue chain is Kasstasin (68 aa).

The N-terminal stretch at 1–20 (MMKKSMLLLFFLGMVSFSLA) is a signal peptide. Residues 21–44 (DDKREDEGEEKRADEGEEKRAAEE) constitute a propeptide that is removed on maturation. The disordered stretch occupies residues 22–41 (DKREDEGEEKRADEGEEKRA). Lysine amide is present on Lys67.

Belongs to the frog skin active peptide (FSAP) family. Brevinin subfamily. Expressed by the skin dorsal glands.

It localises to the secreted. Peptide with potent vasoconstrictor properties (EC50=25 pM). Has moderate antimicrobial activity against Gram-positive bacterium S.aureus (MIC=55 uM) and against Gram-negative bacterium E.coli (MIC=110 uM). Not active against fungus C.albicans. Has weak hemolytic activity against horse erythrocytes. In Phlyctimantis maculatus (Red-legged running frog), this protein is Kasstasin.